A 510-amino-acid chain; its full sequence is ATP synthase subunit alpha (510 aa).

Residue 169–176 participates in ATP binding; the sequence is GDRQTGKT.

The protein belongs to the ATPase alpha/beta chains family. As to quaternary structure, F-type ATPases have 2 components, CF(1) - the catalytic core - and CF(0) - the membrane proton channel. CF(1) has five subunits: alpha(3), beta(3), gamma(1), delta(1), epsilon(1). CF(0) has four main subunits: a(1), b(1), b'(1) and c(9-12).

The protein localises to the cell inner membrane. The enzyme catalyses ATP + H2O + 4 H(+)(in) = ADP + phosphate + 5 H(+)(out). Its function is as follows. Produces ATP from ADP in the presence of a proton gradient across the membrane. The alpha chain is a regulatory subunit. This is ATP synthase subunit alpha from Rhodopseudomonas palustris (strain HaA2).